The primary structure comprises 41 residues: Large ribosomal subunit protein bL36 (41 aa).

It belongs to the bacterial ribosomal protein bL36 family.

The chain is Large ribosomal subunit protein bL36 from Hyphomonas neptunium (strain ATCC 15444).